Here is a 912-residue protein sequence, read N- to C-terminus: WD repeat-containing protein 44 (912 aa).

Disordered regions lie at residues 206 to 352 (DIIE…ELTD), 399 to 426 (SNDAAQSDDEEKPQSHQSETDGGKLKQK), and 460 to 481 (RDEVFHTDQDDPSSSDDEGMPY). Pro residues predominate over residues 236-258 (NRPPQPINAPPPRPPPPARPAPP). Basic and acidic residues predominate over residues 264 to 278 (GDTDFDRSSGFEYQK). Positions 288-311 (SPNTLTENMNRDSQPSLDLASATS) are enriched in polar residues. A compositionally biased stretch (basic and acidic residues) spans 410–422 (KPQSHQSETDGGK). Over residues 469–478 (DDPSSSDDEG) the composition is skewed to acidic residues. The stretch at 511–550 (EHVGAVWTMKFSHCGRLLASAGQDNVVRIWVLKNAFDYFN) is one WD 1 repeat. The segment at 559–594 (EGRVSPSPSQESLNSSKSDTDGGVFSGTDDVDPDDK) is disordered. Residues 563-575 (SPSPSQESLNSSK) show a composition bias toward low complexity. WD repeat units lie at residues 608-646 (GHTADLLDLSWSKNYFLLSSSMDKTVRLWHISRRECLCC), 648-688 (QHID…VALW), 693-732 (GQTKLITAANFCQNGKHAVIGTYDGRCIFYDTEHLKYHTQ), 743-782 (RVGRKITGIEPLPGENKILVTSNDSRIRLYDLRDLSLSMK), 787-826 (VNSSSQIKASFSHDFTYIVSGSEDKYVYIWSTYHDLSKFT), 841-880 (AHNAVVTSAIFAPNPGLMVSAETSSEKQEGDQAEPVENIP), and 882-912 (GALKSDHTEVLLSADFTGAIKVFINKKKNIS). The segment at 861 to 882 (AETSSEKQEGDQAEPVENIPSG) is disordered.

It is found in the cytoplasm. It localises to the cytosol. Its subcellular location is the perinuclear region. The protein localises to the endosome membrane. The protein resides in the golgi apparatus. It is found in the trans-Golgi network. Downstream effector for rab11. May be involved in vesicle recycling. May also be involved in the inhibition of the intracellular ciliogenesis pathway. The protein is WD repeat-containing protein 44 (wdr44) of Xenopus laevis (African clawed frog).